The chain runs to 492 residues: MSVVISIDVGTTRVKVIAFSKNGKIVAISDREVSQIYPEPGWVEQDPLELWEAVRKSLSEVIQQVGLKEINSIGITNQRETVILWDKETGRPVYNAILWQDLRTEDICRKLSEYSEYIKENTGLLLHPYFSASKVNWIIENVNGVKKDIERGKVIFGTVDTWILWNLTGGKVHKTEPSNASRTLLFNIKRLEYDDELLKIFRIPKNILPEVNESSSLFGYTDKSITGVEIPITGILGDQQASLFAHGIRELEEVKNTYGTGLFLMLLTGSKPIIPERLLGTVAWVINGKVNYAIEGSVLTGGACIKWLMDRLKLIKQAADTEYLAKSISSNEGVYFVPAFSGLGAPYWDASARGIIIGITGRTRIEHIARAALEAIAYQTRDVIEEMEKETGVKIKILKADGGASQNNFLMQFQADILGIPVERPRHVELTALGAAGIAGIYSGMWKSKEEFIEDTREVELTFSPEMKKEERELYYSKWKDAVKRAMKWSML.

ADP is bound at residue Thr11. ATP contacts are provided by Thr11 and Thr12. A sn-glycerol 3-phosphate-binding site is contributed by Thr11. Lys15 contacts ADP. Sn-glycerol 3-phosphate contacts are provided by Arg79, Glu80, Tyr129, and Asp238. Residues Arg79, Glu80, Tyr129, Asp238, and Gln239 each contribute to the glycerol site. ADP-binding residues include Thr260, Gly302, Gly403, and Asn407. 3 residues coordinate ATP: Thr260, Gly302, and Gly403.

This sequence belongs to the FGGY kinase family.

It catalyses the reaction glycerol + ATP = sn-glycerol 3-phosphate + ADP + H(+). The protein operates within polyol metabolism; glycerol degradation via glycerol kinase pathway; sn-glycerol 3-phosphate from glycerol: step 1/1. With respect to regulation, inhibited by fructose 1,6-bisphosphate (FBP). In terms of biological role, key enzyme in the regulation of glycerol uptake and metabolism. Catalyzes the phosphorylation of glycerol to yield sn-glycerol 3-phosphate. The polypeptide is Glycerol kinase (Aquifex aeolicus (strain VF5)).